We begin with the raw amino-acid sequence, 319 residues long: Large ribosomal subunit protein eL8 (319 aa).

Residue Lys-87 is modified to N6-acetyllysine. Residue Lys-101 forms a Glycyl lysine isopeptide (Lys-Gly) (interchain with G-Cter in SUMO2) linkage. Lys-150 is modified (N6-acetyllysine; alternate). Lys-150 is covalently cross-linked (Glycyl lysine isopeptide (Lys-Gly) (interchain with G-Cter in SUMO2); alternate). A Glycyl lysine isopeptide (Lys-Gly) (interchain with G-Cter in SUMO2) cross-link involves residue Lys-178. Lys-270 carries the post-translational modification N6-acetyllysine. Lys-298 is covalently cross-linked (Glycyl lysine isopeptide (Lys-Gly) (interchain with G-Cter in SUMO2)).

Belongs to the eukaryotic ribosomal protein eL8 family. As to quaternary structure, component of the large ribosomal subunit. Interacts with CRY1. Interacts with DICER1, AGO2, TARBP2, MOV10 and EIF6; they form a large RNA-induced silencing complex (RISC).

The protein localises to the cytoplasm. Component of the large ribosomal subunit. The ribosome is a large ribonucleoprotein complex responsible for the synthesis of proteins in the cell. The chain is Large ribosomal subunit protein eL8 (RPL7A) from Oryctolagus cuniculus (Rabbit).